The sequence spans 208 residues: MSHASPDAARSRIVLASNNPGKLREFAALFSTAGIDIVPQGELGVSEADEPHATFVENALAKARHASRATGLPAVADDSGLCVPALLGAPGVYSARYAQRAGREKSDAANNAYLVEQLREVADRRAYYYCVLALVRHADDPEPLIAEGRWAGEIVDAPRGAHGFGYDPHFFVPALGATAAELDPAAKNAASHRALALKALVARLGEIR.

17-22 (SNNPGK) serves as a coordination point for substrate. Mg(2+) contacts are provided by aspartate 49 and aspartate 78. Catalysis depends on aspartate 78, which acts as the Proton acceptor. Substrate-binding positions include serine 79, 164-167 (FGYD), lysine 187, and 192-193 (HR).

Belongs to the HAM1 NTPase family. As to quaternary structure, homodimer. Requires Mg(2+) as cofactor.

The catalysed reaction is XTP + H2O = XMP + diphosphate + H(+). It catalyses the reaction dITP + H2O = dIMP + diphosphate + H(+). It carries out the reaction ITP + H2O = IMP + diphosphate + H(+). Its function is as follows. Pyrophosphatase that catalyzes the hydrolysis of nucleoside triphosphates to their monophosphate derivatives, with a high preference for the non-canonical purine nucleotides XTP (xanthosine triphosphate), dITP (deoxyinosine triphosphate) and ITP. Seems to function as a house-cleaning enzyme that removes non-canonical purine nucleotides from the nucleotide pool, thus preventing their incorporation into DNA/RNA and avoiding chromosomal lesions. The chain is dITP/XTP pyrophosphatase from Burkholderia pseudomallei (strain K96243).